We begin with the raw amino-acid sequence, 493 residues long: Zinc finger CCCH domain-containing protein 34 (493 aa).

3 C3H1-type zinc fingers span residues 14–43 (RRCNTDCVYFLASPFTCTKGSKCEYRHADG), 45–71 (RFNRRNCWYWFKGNCVNPSCTFRHPPL), and 91–118 (VKAANPCYFYYNSHCSKGDNCPYLHEPL). Residues 397–477 (MGECPQPANH…SFSDDFEGPK (81 aa)) form a disordered region. Residues 409–420 (FRGRRKKNRGKQ) are compositionally biased toward basic residues. Residues 452–468 (SNSSFSHSTACTPNVRS) show a composition bias toward polar residues.

The chain is Zinc finger CCCH domain-containing protein 34 from Oryza sativa subsp. japonica (Rice).